A 1480-amino-acid polypeptide reads, in one-letter code: DNA polymerase zeta catalytic subunit (1480 aa).

The segment at 403–488 (DRSKFPKSPL…GDTRKAGKRL (86 aa)) is disordered. Positions 411–427 (PLNSSQEVTIHSSQDRQ) are enriched in polar residues. Residues 457-468 (TKREIEFCRDLP) show a composition bias toward basic and acidic residues. Positions 470-479 (RPTSSEPNQG) are enriched in polar residues. Positions 1381, 1384, 1400, and 1403 each coordinate Zn(2+). The segment at 1381-1403 (CSSCLKNNIEIIPDKINSLCSDC) adopts a CysA-type zinc-finger fold. Residues C1432, C1435, C1446, and C1451 each contribute to the [4Fe-4S] cluster site. A CysB motif motif is present at residues 1432–1451 (CRGCSKLSSSDPVLCKSNSC).

It belongs to the DNA polymerase type-B family. In terms of assembly, forms DNA polymerase zeta with rev7. Requires [4Fe-4S] cluster as cofactor.

The protein resides in the mitochondrion. It localises to the nucleus. It carries out the reaction DNA(n) + a 2'-deoxyribonucleoside 5'-triphosphate = DNA(n+1) + diphosphate. Functionally, nonessential DNA polymerase. Required for DNA damage induced mutagenesis. Involved in DNA repair, mitochondrial DNA repair and translesion synthesis. Has a role in the bypass of abasic (AP) sites. This Schizosaccharomyces pombe (strain 972 / ATCC 24843) (Fission yeast) protein is DNA polymerase zeta catalytic subunit (rev3).